A 402-amino-acid chain; its full sequence is UDP-N-acetylmuramoylalanine--D-glutamate ligase (402 aa).

97-103 (GTNGKTT) lines the ATP pocket.

The protein belongs to the MurCDEF family.

It localises to the cytoplasm. It catalyses the reaction UDP-N-acetyl-alpha-D-muramoyl-L-alanine + D-glutamate + ATP = UDP-N-acetyl-alpha-D-muramoyl-L-alanyl-D-glutamate + ADP + phosphate + H(+). It participates in cell wall biogenesis; peptidoglycan biosynthesis. In terms of biological role, cell wall formation. Catalyzes the addition of glutamate to the nucleotide precursor UDP-N-acetylmuramoyl-L-alanine (UMA). The protein is UDP-N-acetylmuramoylalanine--D-glutamate ligase of Campylobacter jejuni subsp. jejuni serotype O:23/36 (strain 81-176).